A 172-amino-acid polypeptide reads, in one-letter code: 3-phenylpropionate/cinnamic acid dioxygenase subunit beta (172 aa).

Belongs to the bacterial ring-hydroxylating dioxygenase beta subunit family. In terms of assembly, this dioxygenase system consists of four proteins: the two subunits of the hydroxylase component (HcaE and HcaF), a ferredoxin (HcaC) and a ferredoxin reductase (HcaD).

The catalysed reaction is 3-phenylpropanoate + NADH + O2 + H(+) = 3-(cis-5,6-dihydroxycyclohexa-1,3-dien-1-yl)propanoate + NAD(+). It carries out the reaction (E)-cinnamate + NADH + O2 + H(+) = (2E)-3-(cis-5,6-dihydroxycyclohexa-1,3-dien-1-yl)prop-2-enoate + NAD(+). Its pathway is aromatic compound metabolism; 3-phenylpropanoate degradation. Part of the multicomponent 3-phenylpropionate dioxygenase. Converts 3-phenylpropionic acid (PP) and cinnamic acid (CI) into 3-phenylpropionate-dihydrodiol (PP-dihydrodiol) and cinnamic acid-dihydrodiol (CI-dihydrodiol), respectively. The sequence is that of 3-phenylpropionate/cinnamic acid dioxygenase subunit beta from Escherichia coli O157:H7.